The sequence spans 287 residues: ATP synthase gamma chain (287 aa).

Belongs to the ATPase gamma chain family. In terms of assembly, F-type ATPases have 2 components, CF(1) - the catalytic core - and CF(0) - the membrane proton channel. CF(1) has five subunits: alpha(3), beta(3), gamma(1), delta(1), epsilon(1). CF(0) has three main subunits: a, b and c.

The protein localises to the cell inner membrane. Its function is as follows. Produces ATP from ADP in the presence of a proton gradient across the membrane. The gamma chain is believed to be important in regulating ATPase activity and the flow of protons through the CF(0) complex. In Baumannia cicadellinicola subsp. Homalodisca coagulata, this protein is ATP synthase gamma chain.